Here is a 160-residue protein sequence, read N- to C-terminus: Cytochrome b6-f complex subunit 4 (160 aa).

A run of 3 helical transmembrane segments spans residues 36 to 56 (LLYI…GLAV), 95 to 115 (LLGV…PFLE), and 131 to 151 (TVFL…TLPI).

It belongs to the cytochrome b family. PetD subfamily. In terms of assembly, the 4 large subunits of the cytochrome b6-f complex are cytochrome b6, subunit IV (17 kDa polypeptide, petD), cytochrome f and the Rieske protein, while the 4 small subunits are petG, petL, petM and petN. The complex functions as a dimer.

The protein resides in the plastid. It is found in the chloroplast thylakoid membrane. In terms of biological role, component of the cytochrome b6-f complex, which mediates electron transfer between photosystem II (PSII) and photosystem I (PSI), cyclic electron flow around PSI, and state transitions. This Arabidopsis thaliana (Mouse-ear cress) protein is Cytochrome b6-f complex subunit 4.